The sequence spans 1325 residues: NHS-like protein 3 (1325 aa).

Residues 53–85 (LEDLHTEAQEGLKILQQEEEDTSSKERNESLEN) are a coiled coil. 10 disordered regions span residues 68-92 (QQEEEDTSSKERNESLENDSTSGHS), 111-131 (QGSTFKPLNPVKRLDKSKRRS), 291-348 (CSAS…KGKC), 368-570 (MSVS…AKTS), 595-614 (QTNTTSSEPLKFSPPLTTVK), 829-891 (EVNG…MEES), 935-981 (LLST…VSEF), 1084-1138 (VGED…SSAV), 1243-1272 (GTKKPIKVPPPVAKKPVHGSNPPNKMENAT), and 1293-1313 (SDQVHPAGQRAQSLGNQEQAS). A compositionally biased stretch (low complexity) spans 296 to 334 (ASKGSMASASPSSSRSGSGTNQAPPTTSPSRSNSQSSET). The segment covering 335-344 (IVSNSSTISS) has biased composition (polar residues). The span at 369 to 378 (SVSSSSSWKS) shows a compositional bias: low complexity. Polar residues predominate over residues 400–412 (VRNSHSFSRSLSV). The segment covering 428-447 (LHHENMQRQREQGDIQDPKD) has biased composition (basic and acidic residues). Residues 450 to 460 (PNNNEQTNRDI) show a composition bias toward polar residues. Residues 515–524 (KTRECGENFD) are compositionally biased toward basic and acidic residues. Positions 528 to 541 (SPSSGYSSQSGTPT) are enriched in low complexity. Over residues 834–850 (SPPPSPPPEHHPPPPPI) the composition is skewed to pro residues. Composition is skewed to polar residues over residues 935 to 948 (LLSTNVSDMDSSPE) and 1088 to 1100 (QVNNDSKPSTEPT). The segment covering 1124–1138 (KSNSPAKSSSASSAV) has biased composition (low complexity). Positions 1302–1311 (RAQSLGNQEQ) are enriched in polar residues.

Able to directly activate the TNF-NFkappaB signaling pathway. The polypeptide is NHS-like protein 3 (nhsl3) (Danio rerio (Zebrafish)).